The following is a 540-amino-acid chain: Glucose-6-phosphate isomerase (540 aa).

The active-site Proton donor is Glu-350. Residues His-381 and Lys-503 contribute to the active site.

This sequence belongs to the GPI family.

Its subcellular location is the cytoplasm. The catalysed reaction is alpha-D-glucose 6-phosphate = beta-D-fructose 6-phosphate. The protein operates within carbohydrate biosynthesis; gluconeogenesis. It functions in the pathway carbohydrate degradation; glycolysis; D-glyceraldehyde 3-phosphate and glycerone phosphate from D-glucose: step 2/4. Functionally, catalyzes the reversible isomerization of glucose-6-phosphate to fructose-6-phosphate. This is Glucose-6-phosphate isomerase from Paraburkholderia xenovorans (strain LB400).